The following is a 245-amino-acid chain: NADH-quinone oxidoreductase subunit C (245 aa).

A compositionally biased stretch (basic and acidic residues) spans Met1–Asp10. Disordered stretches follow at residues Met1–Gly54 and Gln217–Gln245. Low complexity predominate over residues Gly11–Ala28. Residues Gly39 to Gly54 show a composition bias toward gly residues.

Belongs to the complex I 30 kDa subunit family. As to quaternary structure, NDH-1 is composed of 14 different subunits. Subunits NuoB, C, D, E, F, and G constitute the peripheral sector of the complex.

It is found in the cell membrane. The catalysed reaction is a quinone + NADH + 5 H(+)(in) = a quinol + NAD(+) + 4 H(+)(out). Functionally, NDH-1 shuttles electrons from NADH, via FMN and iron-sulfur (Fe-S) centers, to quinones in the respiratory chain. The immediate electron acceptor for the enzyme in this species is believed to be a menaquinone. Couples the redox reaction to proton translocation (for every two electrons transferred, four hydrogen ions are translocated across the cytoplasmic membrane), and thus conserves the redox energy in a proton gradient. The protein is NADH-quinone oxidoreductase subunit C of Salinispora arenicola (strain CNS-205).